A 226-amino-acid chain; its full sequence is Deoxyribose-phosphate aldolase (226 aa).

The Proton donor/acceptor role is filled by glutamate 96. The active-site Schiff-base intermediate with acetaldehyde is lysine 157. Lysine 185 serves as the catalytic Proton donor/acceptor.

It belongs to the DeoC/FbaB aldolase family. DeoC type 1 subfamily.

The protein resides in the cytoplasm. The enzyme catalyses 2-deoxy-D-ribose 5-phosphate = D-glyceraldehyde 3-phosphate + acetaldehyde. It functions in the pathway carbohydrate degradation; 2-deoxy-D-ribose 1-phosphate degradation; D-glyceraldehyde 3-phosphate and acetaldehyde from 2-deoxy-alpha-D-ribose 1-phosphate: step 2/2. Its function is as follows. Catalyzes a reversible aldol reaction between acetaldehyde and D-glyceraldehyde 3-phosphate to generate 2-deoxy-D-ribose 5-phosphate. The sequence is that of Deoxyribose-phosphate aldolase from Gloeobacter violaceus (strain ATCC 29082 / PCC 7421).